A 437-amino-acid chain; its full sequence is F-box only protein 9 (437 aa).

The interval 1–26 is disordered; the sequence is MSAEAEEDCHSDADRVGDEGNESPAE. S2 is modified (N-acetylalanine). Positions 8–26 are enriched in basic and acidic residues; it reads DCHSDADRVGDEGNESPAE. H10 bears the Phosphoserine mark. The TPR repeat unit spans residues 84–117; it reads ARELFLQAVEEEQNGALYEAIKFYRRAMQLVPDI. S126 bears the Phosphoserine mark. An F-box domain is found at 175–226; the sequence is QTHISVLPMEVLMYIFRWVVSSDLDLRSLEQLSLVCRGFYICARDPEIWRLA.

As to quaternary structure, part of the SCF (SKP1-CUL1-F-box) E3 ubiquitin-protein ligase complex SCF(FBXO9) composed of CUL1, SKP1, RBX1 and FBXO9. Interacts with TTI1 and TELO2; when TTI1 and TELO2 are phosphorylated by CK2.

Its subcellular location is the cytoplasm. The protein operates within protein modification; protein ubiquitination. Substrate recognition component of a SCF (SKP1-CUL1-F-box protein) E3 ubiquitin-protein ligase complex which mediates the ubiquitination and subsequent proteasomal degradation of target proteins and plays a role in several biological processes such as cell cycle, cell proliferation, or maintenance of chromosome stability. Ubiquitinates mTORC1-bound TTI1 and TELO2 when they are phosphorylated by CK2 following growth factor deprivation, leading to their degradation. In contrast, does not mediate ubiquitination of TTI1 and TELO2 when they are part of the mTORC2 complex. As a consequence, mTORC1 is inactivated to restrain cell growth and protein translation, while mTORC2 is the activated due to the relief of feedback inhibition by mTORC1. Plays a role in maintaining epithelial cell survival by regulating the turn-over of chromatin modulator PRMT4 through ubiquitination and degradation by the proteasomal pathway. Also regulates PPARgamma stability by facilitating PPARgamma/PPARG ubiquitination and thereby plays a role in adipocyte differentiation. The protein is F-box only protein 9 (Fbxo9) of Mus musculus (Mouse).